The chain runs to 236 residues: Transcriptional activator protein SolR (236 aa).

Residues 169–234 (VPESSAALTA…QAVVKAIAIG (66 aa)) enclose the HTH luxR-type domain. The H-T-H motif DNA-binding region spans 193–212 (AYEIGQILRISERTVNFHVN).

It belongs to the autoinducer-regulated transcriptional regulatory protein family.

This is Transcriptional activator protein SolR (solR) from Ralstonia nicotianae (strain ATCC BAA-1114 / GMI1000) (Ralstonia solanacearum).